The sequence spans 323 residues: Acetyl-coenzyme A carboxylase carboxyl transferase subunit alpha (323 aa).

The CoA carboxyltransferase C-terminal domain occupies 39 to 293; the sequence is RLSKKSQQLT…RRALADSLRQ (255 aa).

The protein belongs to the AccA family. In terms of assembly, acetyl-CoA carboxylase is a heterohexamer composed of biotin carboxyl carrier protein (AccB), biotin carboxylase (AccC) and two subunits each of ACCase subunit alpha (AccA) and ACCase subunit beta (AccD).

It is found in the cytoplasm. It carries out the reaction N(6)-carboxybiotinyl-L-lysyl-[protein] + acetyl-CoA = N(6)-biotinyl-L-lysyl-[protein] + malonyl-CoA. The protein operates within lipid metabolism; malonyl-CoA biosynthesis; malonyl-CoA from acetyl-CoA: step 1/1. Functionally, component of the acetyl coenzyme A carboxylase (ACC) complex. First, biotin carboxylase catalyzes the carboxylation of biotin on its carrier protein (BCCP) and then the CO(2) group is transferred by the carboxyltransferase to acetyl-CoA to form malonyl-CoA. In Burkholderia multivorans (strain ATCC 17616 / 249), this protein is Acetyl-coenzyme A carboxylase carboxyl transferase subunit alpha.